Reading from the N-terminus, the 216-residue chain is UDP-N-acetylglucosamine transferase subunit ALG14 (216 aa).

Over 1–3 (MVC) the chain is Lumenal. The helical transmembrane segment at 4 to 24 (VLVLAAAAGAVAVFLILRIWV) threads the bilayer. Topologically, residues 25–216 (VLRSMDVTPR…PKSVYLGRIV (192 aa)) are cytoplasmic.

The protein belongs to the ALG14 family. Forms with ALG13 the active heterodimeric UDP-N-acetylglucosamine transferase complex.

It is found in the endoplasmic reticulum membrane. Part of the UDP-N-acetylglucosamine transferase complex that operates in the biosynthetic pathway of dolichol-linked oligosaccharides, the glycan precursors employed in protein asparagine (N)-glycosylation. The assembly of dolichol-linked oligosaccharides begins on the cytosolic side of the endoplasmic reticulum membrane and finishes in its lumen. The sequential addition of sugars to dolichol pyrophosphate produces dolichol-linked oligosaccharides containing fourteen sugars, including two GlcNAcs, nine mannoses and three glucoses. Once assembled, the oligosaccharides are transferred from the lipid to nascent proteins by oligosaccharyltransferases. Functions as a protein-membrane adapter recruiting ALG13 at the cytoplasmic face of the endoplasmic reticulum, where the complex catalyzes the second step of dolichol pyrophosphate biosynthesis, transferring a beta1,4-linked N-acetylglucosamine (GlcNAc) from UDP-GlcNAc to GlcNAc-pyrophosphatedolichol (Gn-PDol) to produce N,N'-diacetylchitobiosyl diphosphodolichol. N,N'-diacetylchitobiosyl diphosphodolichol is a substrate for ALG1, the following enzyme in the biosynthetic pathway. This is UDP-N-acetylglucosamine transferase subunit ALG14 from Homo sapiens (Human).